We begin with the raw amino-acid sequence, 571 residues long: MGVDGELKKKKCIIAGVITALLVLMVVAVGITTSRNTSHSEKIVPVQIKTATTAVEAVCAPTDYKETCVNSLMKASPDSTQPLDLIKLGFNVTIRSIEDSIKKASVELTAKAANDKDTKGALELCEKLMNDATDDLKKCLDNFDGFSIPQIEDFVEDLRVWLSGSIAYQQTCMDTFEETNSKLSQDMQKIFKTSRELTSNGLAMITNISNLLGEFNVTGVTGDLGKYARKLLSAEDGIPSWVGPNTRRLMATKGGVKANVVVAHDGSGQYKTINEALNAVPKANQKPFVIYIKQGVYNEKVDVTKKMTHVTFIGDGPTKTKITGSLNYYIGKVKTYLTATVAINGDNFTAKNIGFENTAGPEGHQAVALRVSADLAVFYNCQIDGYQDTLYVHSHRQFFRDCTVSGTVDFIFGDGIVVLQNCNIVVRKPMKSQSCMITAQGRSDKRESTGLVLQNCHITGEPAYIPVKSINKAYLGRPWKEFSRTIIMGTTIDDVIDPAGWLPWNGDFALNTLYYAEYENNGPGSNQAQRVKWPGIKKLSPKQALRFTPARFLRGNLWIPPNRVPYMGNFQ.

The first 28 residues, 1–28 (MGVDGELKKKKCIIAGVITALLVLMVVA), serve as a signal peptide directing secretion. Asn36, Asn91, Asn207, and Asn216 each carry an N-linked (GlcNAc...) asparagine glycan. A pectinesterase inhibitor 58 region spans residues 49-204 (KTATTAVEAV…RELTSNGLAM (156 aa)). Residues 259–556 (NVVVAHDGSG…FTPARFLRGN (298 aa)) form a pectinesterase 58 region. Thr335 serves as a coordination point for substrate. Residue Asn347 is glycosylated (N-linked (GlcNAc...) asparagine). Gln365 provides a ligand contact to substrate. The Proton donor; for pectinesterase activity role is filled by Asp388. Cys402 and Cys422 are disulfide-bonded. Catalysis depends on Asp409, which acts as the Nucleophile; for pectinesterase activity. Residues Arg477 and Trp479 each contribute to the substrate site.

The protein in the N-terminal section; belongs to the PMEI family. In the C-terminal section; belongs to the pectinesterase family. As to expression, expressed in siliques, but not in flower buds.

The protein resides in the secreted. It is found in the cell wall. It carries out the reaction [(1-&gt;4)-alpha-D-galacturonosyl methyl ester](n) + n H2O = [(1-&gt;4)-alpha-D-galacturonosyl](n) + n methanol + n H(+). Its pathway is glycan metabolism; pectin degradation; 2-dehydro-3-deoxy-D-gluconate from pectin: step 1/5. Acts in the modification of cell walls via demethylesterification of cell wall pectin. This is Probable pectinesterase/pectinesterase inhibitor 58 (PME58) from Arabidopsis thaliana (Mouse-ear cress).